Reading from the N-terminus, the 275-residue chain is Secreted RxLR effector protein 153 (275 aa).

Positions 1–27 are cleaved as a signal peptide; sequence MRNRAFLFGLFFIEYACLVLFAAPTRA. An N-linked (GlcNAc...) asparagine glycan is attached at Asn-45. The RxLR-dEER signature appears at 48-63; sequence RTLQADDSKRISAEER.

The protein belongs to the RxLR effector family.

The protein localises to the secreted. The protein resides in the host cell membrane. Its function is as follows. Secreted effector that completely suppresses the host cell death induced by cell death-inducing proteins. This Plasmopara viticola (Downy mildew of grapevine) protein is Secreted RxLR effector protein 153.